The primary structure comprises 502 residues: Lysine--tRNA ligase (502 aa).

Mg(2+) is bound by residues glutamate 411 and glutamate 418.

This sequence belongs to the class-II aminoacyl-tRNA synthetase family. Homodimer. The cofactor is Mg(2+).

It is found in the cytoplasm. It catalyses the reaction tRNA(Lys) + L-lysine + ATP = L-lysyl-tRNA(Lys) + AMP + diphosphate. The protein is Lysine--tRNA ligase of Clostridium tetani (strain Massachusetts / E88).